Reading from the N-terminus, the 133-residue chain is MSIFTKIINRELPGRFVYEDDDVVAFLTIEPMTQGHTLVVPRAEIDHWQNVDPALFGRVMSVSQLIGKAVCRAFSTQRAGMIIAGLEVPHLHIHVFPTRSLSDFGFANVDRNPSPGSLDEAQAKIRAALAQLA.

The 104-residue stretch at 3–106 (IFTKIINREL…PTRSLSDFGF (104 aa)) folds into the HIT domain. The Histidine triad motif signature appears at 90–94 (HLHIH).

This is an uncharacterized protein from Mycobacterium tuberculosis (strain ATCC 25618 / H37Rv).